Reading from the N-terminus, the 98-residue chain is NADH-ubiquinone oxidoreductase chain 4L (98 aa).

3 helical membrane-spanning segments follow: residues 1–21, 29–49, and 59–79; these read MSLV…GLLM, SLLC…LTIL, and MPII…SLLV.

It belongs to the complex I subunit 4L family. As to quaternary structure, core subunit of respiratory chain NADH dehydrogenase (Complex I) which is composed of 45 different subunits.

Its subcellular location is the mitochondrion inner membrane. The enzyme catalyses a ubiquinone + NADH + 5 H(+)(in) = a ubiquinol + NAD(+) + 4 H(+)(out). Core subunit of the mitochondrial membrane respiratory chain NADH dehydrogenase (Complex I) which catalyzes electron transfer from NADH through the respiratory chain, using ubiquinone as an electron acceptor. Part of the enzyme membrane arm which is embedded in the lipid bilayer and involved in proton translocation. This is NADH-ubiquinone oxidoreductase chain 4L (MT-ND4L) from Cervus elaphus (Red deer).